The sequence spans 308 residues: Glutaminase (308 aa).

7 residues coordinate substrate: S66, N117, E161, N168, Y192, Y244, and V262.

It belongs to the glutaminase family. As to quaternary structure, homotetramer.

The catalysed reaction is L-glutamine + H2O = L-glutamate + NH4(+). The sequence is that of Glutaminase from Salmonella choleraesuis (strain SC-B67).